A 105-amino-acid chain; its full sequence is uncharacterized protein (105 aa).

The protein belongs to the M.jannaschii MJ0023/MJ0349/MJ1072/MJ1074/MJ1107/MJECL16 family.

This is an uncharacterized protein from Methanocaldococcus jannaschii (strain ATCC 43067 / DSM 2661 / JAL-1 / JCM 10045 / NBRC 100440) (Methanococcus jannaschii).